A 79-amino-acid chain; its full sequence is Beta-defensin 15 (79 aa).

The signal sequence occupies residues 1-20 (MKTFLFLFAVLFFLDPAKNA). 3 cysteine pairs are disulfide-bonded: Cys26/Cys53, Cys33/Cys47, and Cys37/Cys54.

It belongs to the beta-defensin family. Expressed in testis and to a lesser extent in epididymis (caput, corpus and cauda). Also weakly expressed in kidneys and colon.

It localises to the secreted. Functionally, has antibacterial activity. This is Beta-defensin 15 (Defb15) from Mus musculus (Mouse).